Consider the following 179-residue polypeptide: Adenine phosphoribosyltransferase (179 aa).

The protein belongs to the purine/pyrimidine phosphoribosyltransferase family. Homodimer.

The protein localises to the cytoplasm. It carries out the reaction AMP + diphosphate = 5-phospho-alpha-D-ribose 1-diphosphate + adenine. The protein operates within purine metabolism; AMP biosynthesis via salvage pathway; AMP from adenine: step 1/1. Catalyzes a salvage reaction resulting in the formation of AMP, that is energically less costly than de novo synthesis. The polypeptide is Adenine phosphoribosyltransferase (Histophilus somni (strain 129Pt) (Haemophilus somnus)).